A 377-amino-acid polypeptide reads, in one-letter code: MKNTIINLAQDLIRRPSISPDDQGCQQVIAERLTKLGFNIEWMSFNDTINLWAKHGTTSPVVAFAGHTDVVPTGDENQWNYPPFSAQIVDDMLYGRGAADMKGSLAAMIVAAEEYVKANPNHAGTIALLITSDEEAAAKDGTVKVVESLMARGENIDYCLVGEPSSAKQLGDVVKNGRRGSITGDLYIQGIQGHVAYPHLAENPVHKATKFLTELTTYEWDNGNEFFPPTSLQIANIHAGTGSNNVIPGELYVQFNLRYCTEVTDEFIKNKVAEMLQKHDLTYRIDWNLSGKPFLTKPGKLLNAVVESLESVAGIKPKLDTGGGTSDGRFIALMGAEVVELGPLNATIHKVNECVSCRDLATLGEVYRQMLVNLLGK.

Residue His-67 participates in Zn(2+) binding. Residue Asp-69 is part of the active site. Asp-100 serves as a coordination point for Zn(2+). The Proton acceptor role is filled by Glu-134. Residues Glu-135, Glu-163, and His-349 each coordinate Zn(2+).

It belongs to the peptidase M20A family. DapE subfamily. As to quaternary structure, homodimer. It depends on Zn(2+) as a cofactor. The cofactor is Co(2+).

The catalysed reaction is N-succinyl-(2S,6S)-2,6-diaminopimelate + H2O = (2S,6S)-2,6-diaminopimelate + succinate. It functions in the pathway amino-acid biosynthesis; L-lysine biosynthesis via DAP pathway; LL-2,6-diaminopimelate from (S)-tetrahydrodipicolinate (succinylase route): step 3/3. In terms of biological role, catalyzes the hydrolysis of N-succinyl-L,L-diaminopimelic acid (SDAP), forming succinate and LL-2,6-diaminopimelate (DAP), an intermediate involved in the bacterial biosynthesis of lysine and meso-diaminopimelic acid, an essential component of bacterial cell walls. This Mannheimia succiniciproducens (strain KCTC 0769BP / MBEL55E) protein is Succinyl-diaminopimelate desuccinylase.